An 85-amino-acid chain; its full sequence is CRISPR-associated endoribonuclease Cas2 (85 aa).

D8 serves as a coordination point for Mg(2+).

This sequence belongs to the CRISPR-associated endoribonuclease Cas2 protein family. Homodimer, forms a heterotetramer with a Cas1 homodimer. It depends on Mg(2+) as a cofactor.

CRISPR (clustered regularly interspaced short palindromic repeat), is an adaptive immune system that provides protection against mobile genetic elements (viruses, transposable elements and conjugative plasmids). CRISPR clusters contain sequences complementary to antecedent mobile elements and target invading nucleic acids. CRISPR clusters are transcribed and processed into CRISPR RNA (crRNA). Functions as a ssRNA-specific endoribonuclease. Involved in the integration of spacer DNA into the CRISPR cassette. The polypeptide is CRISPR-associated endoribonuclease Cas2 (Thermococcus kodakarensis (strain ATCC BAA-918 / JCM 12380 / KOD1) (Pyrococcus kodakaraensis (strain KOD1))).